A 235-amino-acid chain; its full sequence is Urease accessory protein UreF (235 aa).

The protein belongs to the UreF family. As to quaternary structure, ureD, UreF and UreG form a complex that acts as a GTP-hydrolysis-dependent molecular chaperone, activating the urease apoprotein by helping to assemble the nickel containing metallocenter of UreC. The UreE protein probably delivers the nickel.

The protein localises to the cytoplasm. In terms of biological role, required for maturation of urease via the functional incorporation of the urease nickel metallocenter. The protein is Urease accessory protein UreF of Ureaplasma urealyticum serovar 10 (strain ATCC 33699 / Western).